Consider the following 350-residue polypeptide: tRNA uridine(34) hydroxylase (350 aa).

The 95-residue stretch at 146–240 (DDPDALFIDM…YARKAREQGL (95 aa)) folds into the Rhodanese domain. The active-site Cysteine persulfide intermediate is cysteine 200.

The protein belongs to the TrhO family.

The enzyme catalyses uridine(34) in tRNA + AH2 + O2 = 5-hydroxyuridine(34) in tRNA + A + H2O. In terms of biological role, catalyzes oxygen-dependent 5-hydroxyuridine (ho5U) modification at position 34 in tRNAs, the first step in 5-carboxymethoxyuridine (cmo5U) biosynthesis. May be part of an alternate pathway, which is able to bypass cmo5U biogenesis in a subset of tRNAs under aerobic conditions. The sequence is that of tRNA uridine(34) hydroxylase from Escherichia coli O45:K1 (strain S88 / ExPEC).